The following is a 447-amino-acid chain: Cysteine--tRNA ligase (447 aa).

C28 contacts Zn(2+). A 'HIGH' region motif is present at residues 30 to 40 (PTVYNYIHVGN). 3 residues coordinate Zn(2+): C211, H236, and E240. Positions 268 to 272 (KMSKS) match the 'KMSKS' region motif. K271 lines the ATP pocket.

The protein belongs to the class-I aminoacyl-tRNA synthetase family. Monomer. Zn(2+) is required as a cofactor.

It is found in the cytoplasm. It catalyses the reaction tRNA(Cys) + L-cysteine + ATP = L-cysteinyl-tRNA(Cys) + AMP + diphosphate. The sequence is that of Cysteine--tRNA ligase from Streptococcus pneumoniae serotype 4 (strain ATCC BAA-334 / TIGR4).